We begin with the raw amino-acid sequence, 234 residues long: Potassium/proton antiporter CemA (234 aa).

4 consecutive transmembrane segments (helical) span residues 8–28 (IPLR…WIPL), 117–137 (TICF…LFIL), 157–177 (ILFV…ELLI), and 193–213 (IILS…FKYW).

This sequence belongs to the CemA family.

It is found in the plastid. The protein localises to the chloroplast inner membrane. The catalysed reaction is K(+)(in) + H(+)(out) = K(+)(out) + H(+)(in). Its function is as follows. Contributes to K(+)/H(+) antiport activity by supporting proton efflux to control proton extrusion and homeostasis in chloroplasts in a light-dependent manner to modulate photosynthesis. Prevents excessive induction of non-photochemical quenching (NPQ) under continuous-light conditions. Indirectly promotes efficient inorganic carbon uptake into chloroplasts. The chain is Potassium/proton antiporter CemA from Citrus sinensis (Sweet orange).